The following is a 124-amino-acid chain: UPF0357 protein C1687.07 (124 aa).

Residues Met-1–Ala-24 form the signal peptide.

This sequence belongs to the UPF0357 family.

The sequence is that of UPF0357 protein C1687.07 from Schizosaccharomyces pombe (strain 972 / ATCC 24843) (Fission yeast).